The following is a 351-amino-acid chain: Outer membrane protein A (351 aa).

An N-terminal signal peptide occupies residues 1–21 (MKKTAIAITVALAGFATVAQA). 8 beta stranded membrane passes run 27-37 (TWYTGAKLGWS), 55-66 (QLGAGAFGGYQV), 70-78 (VGFEMGYDW), 96-107 (QGVQLTAKLGYP), 112-120 (LDVYTRLGG), 147-156 (PVFAGGVEWA), 161-168 (IATRLEYQ), and 187-195 (LLSLGVSYR). 4 consecutive repeat copies span residues 206 to 207 (AP), 208 to 209 (AP), 210 to 211 (AP), and 212 to 213 (AP). A 4 X 2 AA tandem repeats of A-P region spans residues 206 to 213 (APAPAPAP). In terms of domain architecture, OmpA-like spans 215–343 (VQTKHFTLKS…RVEIEVKGIK (129 aa)). A disulfide bridge links Cys316 with Cys328.

It belongs to the outer membrane OOP (TC 1.B.6) superfamily. OmpA family. As to quaternary structure, monomer and homodimer.

The protein resides in the cell outer membrane. With TolR probably plays a role in maintaining the position of the peptidoglycan cell wall in the periplasm. Acts as a porin with low permeability that allows slow penetration of small solutes; an internal gate slows down solute passage. In terms of biological role, required for conjugation with F-type plasmids; probably serves as the mating receptor on recipient cells. In Shigella dysenteriae, this protein is Outer membrane protein A.